Reading from the N-terminus, the 513-residue chain is Na(+)/H(+) antiporter NhaB (513 aa).

12 helical membrane-spanning segments follow: residues 23-43, 52-72, 97-117, 120-140, 144-164, 202-222, 238-258, 303-323, 348-368, 391-411, 447-467, and 475-495; these read LALI…PFVA, IFTL…LLAI, LLLM…LFIF, LLLS…AAAF, FLDA…FYGI, LMMH…VGEP, FFLR…LTCL, AIIG…VGLI, TESL…AVII, LFYI…VGTI, ATPN…APLI, and VWMA…CVEF.

It belongs to the NhaB Na(+)/H(+) (TC 2.A.34) antiporter family.

Its subcellular location is the cell inner membrane. The catalysed reaction is 2 Na(+)(in) + 3 H(+)(out) = 2 Na(+)(out) + 3 H(+)(in). Its function is as follows. Na(+)/H(+) antiporter that extrudes sodium in exchange for external protons. The chain is Na(+)/H(+) antiporter NhaB from Shigella flexneri serotype 5b (strain 8401).